The following is a 425-amino-acid chain: Serine hydroxymethyltransferase (425 aa).

(6S)-5,6,7,8-tetrahydrofolate is bound by residues Leu123 and 127-129 (GHL). An N6-(pyridoxal phosphate)lysine modification is found at Lys232. Residue Glu248 participates in (6S)-5,6,7,8-tetrahydrofolate binding.

This sequence belongs to the SHMT family. In terms of assembly, homodimer. It depends on pyridoxal 5'-phosphate as a cofactor.

Its subcellular location is the cytoplasm. It catalyses the reaction (6R)-5,10-methylene-5,6,7,8-tetrahydrofolate + glycine + H2O = (6S)-5,6,7,8-tetrahydrofolate + L-serine. It participates in one-carbon metabolism; tetrahydrofolate interconversion. Its pathway is amino-acid biosynthesis; glycine biosynthesis; glycine from L-serine: step 1/1. Functionally, catalyzes the reversible interconversion of serine and glycine with tetrahydrofolate (THF) serving as the one-carbon carrier. This reaction serves as the major source of one-carbon groups required for the biosynthesis of purines, thymidylate, methionine, and other important biomolecules. Also exhibits THF-independent aldolase activity toward beta-hydroxyamino acids, producing glycine and aldehydes, via a retro-aldol mechanism. The polypeptide is Serine hydroxymethyltransferase (Anaplasma phagocytophilum (strain HZ)).